The sequence spans 370 residues: Chaperone protein DnaJ (370 aa).

One can recognise a J domain in the interval 6–70 (DFYEILGVSK…QKRANYDQFG (65 aa)). The CR-type zinc-finger motif lies at 134 to 216 (GANKSVTLNV…CHGKGFNTKR (83 aa)). Positions 147, 150, 164, 167, 190, 193, 204, and 207 each coordinate Zn(2+). CXXCXGXG motif repeat units lie at residues 147–154 (CTSCHGSG), 164–171 (CSRCGGTG), 190–197 (CPDCGGSG), and 204–211 (CGECHGKG).

It belongs to the DnaJ family. Homodimer. It depends on Zn(2+) as a cofactor.

It localises to the cytoplasm. Functionally, participates actively in the response to hyperosmotic and heat shock by preventing the aggregation of stress-denatured proteins and by disaggregating proteins, also in an autonomous, DnaK-independent fashion. Unfolded proteins bind initially to DnaJ; upon interaction with the DnaJ-bound protein, DnaK hydrolyzes its bound ATP, resulting in the formation of a stable complex. GrpE releases ADP from DnaK; ATP binding to DnaK triggers the release of the substrate protein, thus completing the reaction cycle. Several rounds of ATP-dependent interactions between DnaJ, DnaK and GrpE are required for fully efficient folding. Also involved, together with DnaK and GrpE, in the DNA replication of plasmids through activation of initiation proteins. This is Chaperone protein DnaJ from Erysipelothrix rhusiopathiae.